Reading from the N-terminus, the 364-residue chain is Aromatic prenyltransferase (364 aa).

Positions 1–22 (MDRNQWTLALMALMRFAHRAFI) are cleaved as a signal peptide. N-linked (GlcNAc...) asparagine glycosylation is found at N142 and N337.

The protein belongs to the aromatic prenyltransferase family.

In terms of biological role, prenyltransferase that attaches isoprenoid moieties to carbon atoms of aromatic substrates in an enzyme-catalyzed Friedel-Crafts reaction. In Talaromyces marneffei (strain ATCC 18224 / CBS 334.59 / QM 7333) (Penicillium marneffei), this protein is Aromatic prenyltransferase.